A 343-amino-acid polypeptide reads, in one-letter code: S-adenosylmethionine:tRNA ribosyltransferase-isomerase (343 aa).

Belongs to the QueA family. As to quaternary structure, monomer.

The protein localises to the cytoplasm. It carries out the reaction 7-aminomethyl-7-carbaguanosine(34) in tRNA + S-adenosyl-L-methionine = epoxyqueuosine(34) in tRNA + adenine + L-methionine + 2 H(+). The protein operates within tRNA modification; tRNA-queuosine biosynthesis. Transfers and isomerizes the ribose moiety from AdoMet to the 7-aminomethyl group of 7-deazaguanine (preQ1-tRNA) to give epoxyqueuosine (oQ-tRNA). The protein is S-adenosylmethionine:tRNA ribosyltransferase-isomerase of Borreliella burgdorferi (strain ATCC 35210 / DSM 4680 / CIP 102532 / B31) (Borrelia burgdorferi).